The following is an 81-amino-acid chain: Omega-conotoxin-like 3 (81 aa).

Residues Met-1–Ala-22 form the signal peptide. The propeptide occupies Asp-23 to Arg-51. Intrachain disulfides connect Cys-53/Cys-71, Cys-60/Cys-75, and Cys-70/Cys-79.

It belongs to the conotoxin O1 superfamily. In terms of tissue distribution, expressed by the venom duct.

The protein resides in the secreted. In terms of biological role, omega-conotoxins act at presynaptic membranes, they bind and block voltage-gated calcium channels (Cav). The polypeptide is Omega-conotoxin-like 3 (Conus imperialis (Imperial cone)).